Here is a 378-residue protein sequence, read N- to C-terminus: tRNA N(3)-cytidine methyltransferase METTL2B (378 aa).

An N-acetylalanine modification is found at Ala2. Ser4 carries the phosphoserine modification. Positions 78 and 82 each coordinate S-adenosyl-L-methionine. Thr154 carries the post-translational modification Phosphothreonine. S-adenosyl-L-methionine-binding residues include Gly188, Asp213, Asp239, Leu240, and Ile260.

Belongs to the methyltransferase superfamily. METL family. In terms of assembly, monomer. Interacts with DALRD3.

It is found in the cytoplasm. It carries out the reaction cytidine(32) in tRNA(Thr) + S-adenosyl-L-methionine = N(3)-methylcytidine(32) in tRNA(Thr) + S-adenosyl-L-homocysteine + H(+). It catalyses the reaction cytidine(32) in tRNA(Arg)(CCU) + S-adenosyl-L-methionine = N(3)-methylcytidine(32) in tRNA(Arg)(CCU) + S-adenosyl-L-homocysteine + H(+). S-adenosyl-L-methionine-dependent methyltransferase that mediates N(3)-methylcytidine modification of residue 32 of the tRNA anticodon loop of tRNA(Thr)(UGU) and tRNA(Arg)(CCU). This is tRNA N(3)-cytidine methyltransferase METTL2B from Homo sapiens (Human).